The following is a 64-amino-acid chain: Delta-buthitoxin-Hj2a (64 aa).

Intrachain disulfides connect cysteine 12–cysteine 63, cysteine 16–cysteine 36, cysteine 22–cysteine 46, and cysteine 26–cysteine 48. Arginine 64 carries the post-translational modification Arginine amide.

The protein belongs to the long (4 C-C) scorpion toxin superfamily. Sodium channel inhibitor family. Alpha subfamily. Expressed by the venom gland.

It localises to the secreted. This non-amidated recombinant toxin slows fast inactivation on Nav1.1/SCN1A (EC(50)=52.8 nM), Nav1.4/SN4A (EC(50)=32 nM), Nav1.5/SCN5A (EC(50)=116.7 nM), Nav1.6/SCN8A (EC(50)=46.3 nM), and Nav1.7/SCN9A (EC(50)=147.4 nM) voltage-gated sodium channels. On Nav1.1/SCN1A channel, acts as an agonist by inducing a shift in both the voltage dependence of channel inactivation (alpha-toxin activity) and activation (beta-toxin activity). This chain is Delta-buthitoxin-Hj2a, found in Hottentotta judaicus (Black scorpion).